Here is a 281-residue protein sequence, read N- to C-terminus: MADLPPLREVIARHGLDARKSLGQHFLFDLNLTGRIARAAGDLTVGSVIEIGPGPGGLTRALLDAGARQVIAIERDDRAIAIQNEIAEAYPGRLEIMAADAMTVDAAELGEVPRRIVANLPYNISTALLLGWLRRADAFERLVLMFQKEVVDRLAAPPRSEHYGRLSVITQWRCEVRPLFNVDRRAFTPPPAVTSTVVDLIPRAEPLAPARFETLERVTAAAFGQRRKMLRSSLKSLGGAEDLLERTGILPTARAEEIPVEGFCALARALDARTLDGHQSA.

S-adenosyl-L-methionine contacts are provided by H25, L27, G52, E74, D100, and N119.

Belongs to the class I-like SAM-binding methyltransferase superfamily. rRNA adenine N(6)-methyltransferase family. RsmA subfamily.

It is found in the cytoplasm. The enzyme catalyses adenosine(1518)/adenosine(1519) in 16S rRNA + 4 S-adenosyl-L-methionine = N(6)-dimethyladenosine(1518)/N(6)-dimethyladenosine(1519) in 16S rRNA + 4 S-adenosyl-L-homocysteine + 4 H(+). Its function is as follows. Specifically dimethylates two adjacent adenosines (A1518 and A1519) in the loop of a conserved hairpin near the 3'-end of 16S rRNA in the 30S particle. May play a critical role in biogenesis of 30S subunits. The chain is Ribosomal RNA small subunit methyltransferase A from Paramagnetospirillum magneticum (strain ATCC 700264 / AMB-1) (Magnetospirillum magneticum).